The primary structure comprises 25 residues: TPDHQRYVELFIVVDHGMYTKYNGD.

Glutamate 9 contributes to the Ca(2+) binding site.

The protein belongs to the venom metalloproteinase (M12B) family. In terms of assembly, monomer. Zn(2+) serves as cofactor. In terms of tissue distribution, expressed by the venom gland.

The protein localises to the secreted. With respect to regulation, inhibited by EDTA, beta-mercaptoethanol, but not by PMSF, p-tosyl-L-phenylalanine chloromethyl ketone, p-tosyl-L-lysine chloromethyl ketone, soybean trypsin inhibitor and aprotinin. In terms of biological role, metalloprotease that is highly active against alpha-(FGA) and beta-chains (FGB) of fibrinogen molecules. In Crotalus atrox (Western diamondback rattlesnake), this protein is Snake venom metalloproteinase catroxase.